The sequence spans 460 residues: UDP-glucuronate 4-epimerase 6 (460 aa).

The next 2 helical transmembrane spans lie at 41–61 and 111–131; these read ATLLVALVLVLIFAINYPPLS and GLSVLVTGAAGFVGSHCSLAL. 113 to 144 is an NAD(+) binding site; the sequence is SVLVTGAAGFVGSHCSLALRKRGDGVLGFDNF. Tyrosine 263 acts as the Proton acceptor in catalysis.

This sequence belongs to the NAD(P)-dependent epimerase/dehydratase family. As to quaternary structure, homodimer. In roots, leaf veins, siliques, flowers, pollen and stems.

The protein resides in the golgi apparatus. The protein localises to the golgi stack membrane. The enzyme catalyses UDP-alpha-D-glucuronate = UDP-alpha-D-galacturonate. Its function is as follows. Involved in the synthesis of the negatively charged monosaccharide that forms the backbone of pectic cell wall components. The protein is UDP-glucuronate 4-epimerase 6 (GAE6) of Arabidopsis thaliana (Mouse-ear cress).